A 535-amino-acid polypeptide reads, in one-letter code: CTP synthase (535 aa).

An amidoligase domain region spans residues M1–L267. S13 contacts CTP. A UTP-binding site is contributed by S13. S14 to I19 lines the ATP pocket. Residue Y54 participates in L-glutamine binding. Position 71 (D71) interacts with ATP. Residues D71 and E141 each contribute to the Mg(2+) site. Residues D148–E150, K188–Q193, and K224 each bind CTP. UTP is bound by residues K188–Q193 and K224. The 243-residue stretch at T292–K534 folds into the Glutamine amidotransferase type-1 domain. Residue G354 coordinates L-glutamine. Catalysis depends on C381, which acts as the Nucleophile; for glutamine hydrolysis. Residues L382–Q385, E405, and R462 each bind L-glutamine. Active-site residues include H507 and E509.

The protein belongs to the CTP synthase family. As to quaternary structure, homotetramer.

The catalysed reaction is UTP + L-glutamine + ATP + H2O = CTP + L-glutamate + ADP + phosphate + 2 H(+). It catalyses the reaction L-glutamine + H2O = L-glutamate + NH4(+). It carries out the reaction UTP + NH4(+) + ATP = CTP + ADP + phosphate + 2 H(+). Its pathway is pyrimidine metabolism; CTP biosynthesis via de novo pathway; CTP from UDP: step 2/2. Allosterically activated by GTP, when glutamine is the substrate; GTP has no effect on the reaction when ammonia is the substrate. The allosteric effector GTP functions by stabilizing the protein conformation that binds the tetrahedral intermediate(s) formed during glutamine hydrolysis. Inhibited by the product CTP, via allosteric rather than competitive inhibition. Its function is as follows. Catalyzes the ATP-dependent amination of UTP to CTP with either L-glutamine or ammonia as the source of nitrogen. Regulates intracellular CTP levels through interactions with the four ribonucleotide triphosphates. This Bacillus licheniformis (strain ATCC 14580 / DSM 13 / JCM 2505 / CCUG 7422 / NBRC 12200 / NCIMB 9375 / NCTC 10341 / NRRL NRS-1264 / Gibson 46) protein is CTP synthase.